The following is a 301-amino-acid chain: Galectin-6 (301 aa).

2 consecutive Galectin domains span residues 19–149 and 173–301; these read YKRP…INFF and YVGA…YVHI.

The chain is Galectin-6 (Lgals6) from Mus musculus (Mouse).